Here is a 296-residue protein sequence, read N- to C-terminus: NAD kinase (296 aa).

Aspartate 72 acts as the Proton acceptor in catalysis. NAD(+) is bound by residues aspartate 72 to glycine 73, asparagine 146 to aspartate 147, arginine 157, lysine 174, aspartate 176, threonine 187 to serine 192, and glutamine 247.

Belongs to the NAD kinase family. Requires a divalent metal cation as cofactor.

It localises to the cytoplasm. The catalysed reaction is NAD(+) + ATP = ADP + NADP(+) + H(+). Its function is as follows. Involved in the regulation of the intracellular balance of NAD and NADP, and is a key enzyme in the biosynthesis of NADP. Catalyzes specifically the phosphorylation on 2'-hydroxyl of the adenosine moiety of NAD to yield NADP. The sequence is that of NAD kinase from Pseudomonas putida (strain ATCC 700007 / DSM 6899 / JCM 31910 / BCRC 17059 / LMG 24140 / F1).